We begin with the raw amino-acid sequence, 1284 residues long: ABC multidrug transporter atrC (1284 aa).

Basic and acidic residues predominate over residues 1–11 (MKSTAESKETP). The segment at 1–24 (MKSTAESKETPSQDESTTSVPCTE) is disordered. Transmembrane regions (helical) follow at residues 55–75 (AVAI…NLIF), 99–119 (AAEL…LSYT), 178–198 (IGLL…RLWC), 203–223 (TLIC…VAAV), 282–302 (LLGL…GLAF), and 320–340 (IFTV…LAPY). Residues 55–346 (AVAILAACAS…LAPYSIEFSR (292 aa)) form the ABC transmembrane type-1 1 domain. The ABC transporter 1 domain maps to 381-626 (VELENVTFSY…DGVYAGLVKI (246 aa)). Residues Asn385 and Asn401 are each glycosylated (N-linked (GlcNAc...) asparagine). ATP is bound at residue 416–423 (GQSGSGKS). N-linked (GlcNAc...) asparagine glycans are attached at residues Asn488 and Asn632. Helical transmembrane passes span 705-725 (LVVL…AILM) and 745-765 (FYAS…LAVG). The ABC transmembrane type-1 2 domain occupies 705–992 (LVVLLGCLGG…LFQWSTSITK (288 aa)). The N-linked (GlcNAc...) asparagine glycan is linked to Asn800. Helical transmembrane passes span 824 to 844 (IALV…AIAF), 846 to 866 (WKLG…AGMV), 931 to 951 (MICF…GFWY), and 955 to 975 (LVSL…SVFF). Residue Asn995 is glycosylated (N-linked (GlcNAc...) asparagine). The ABC transporter 2 domain maps to 1027–1280 (IAMDNVRFSY…GGLYRRMCEA (254 aa)). 1062-1069 (GSSGCGKS) contacts ATP. An N-linked (GlcNAc...) asparagine glycan is attached at Asn1122.

The protein belongs to the ABC transporter superfamily. ABCB family. Multidrug resistance exporter (TC 3.A.1.201) subfamily.

The protein resides in the cell membrane. Functionally, pleiotropic ABC efflux transporter involved in the protection of the cells against a wide range of toxic compounds. In Emericella nidulans (Aspergillus nidulans), this protein is ABC multidrug transporter atrC.